Here is a 320-residue protein sequence, read N- to C-terminus: N-acetylneuraminate lyase (320 aa).

Residues Thr51 and Thr52 each coordinate aceneuramate. Tyr143 functions as the Proton donor in the catalytic mechanism. Lys173 (schiff-base intermediate with substrate) is an active-site residue. Aceneuramate contacts are provided by Ser175, Gly199, Asp201, Glu202, and Ser218.

The protein belongs to the DapA family. NanA subfamily. Homotetramer.

The protein localises to the cytoplasm. The enzyme catalyses aceneuramate = aldehydo-N-acetyl-D-mannosamine + pyruvate. It participates in amino-sugar metabolism; N-acetylneuraminate degradation. Its function is as follows. Catalyzes the cleavage of N-acetylneuraminic acid (sialic acid) to form pyruvate and N-acetylmannosamine via a Schiff base intermediate. It prevents sialic acids from being recycled and returning to the cell surface. Involved in the N-glycolylneuraminic acid (Neu5Gc) degradation pathway. The sequence is that of N-acetylneuraminate lyase from Rattus norvegicus (Rat).